The chain runs to 288 residues: Elongation factor Ts (288 aa).

An involved in Mg(2+) ion dislocation from EF-Tu region spans residues 80–83; that stretch reads TDFV.

This sequence belongs to the EF-Ts family.

The protein resides in the cytoplasm. Functionally, associates with the EF-Tu.GDP complex and induces the exchange of GDP to GTP. It remains bound to the aminoacyl-tRNA.EF-Tu.GTP complex up to the GTP hydrolysis stage on the ribosome. In Chromobacterium violaceum (strain ATCC 12472 / DSM 30191 / JCM 1249 / CCUG 213 / NBRC 12614 / NCIMB 9131 / NCTC 9757 / MK), this protein is Elongation factor Ts.